We begin with the raw amino-acid sequence, 92 residues long: Sec-independent protein translocase protein TatA (92 aa).

Residues 1-21 (MGIFDWKHWIVILVVVVLVFG) form a helical membrane-spanning segment. The tract at residues 43–92 (MNDDEKPADPTVTPAQPVPPVQPQATAQANPPHTIDVQAQKVEEPIRKDV) is disordered. The segment covering 65–74 (PQATAQANPP) has biased composition (low complexity). The segment covering 83–92 (KVEEPIRKDV) has biased composition (basic and acidic residues).

The protein belongs to the TatA/E family. As to quaternary structure, the Tat system comprises two distinct complexes: a TatABC complex, containing multiple copies of TatA, TatB and TatC subunits, and a separate TatA complex, containing only TatA subunits. Substrates initially bind to the TatABC complex, which probably triggers association of the separate TatA complex to form the active translocon.

The protein resides in the cell inner membrane. Part of the twin-arginine translocation (Tat) system that transports large folded proteins containing a characteristic twin-arginine motif in their signal peptide across membranes. TatA could form the protein-conducting channel of the Tat system. In Pseudomonas fluorescens (strain Pf0-1), this protein is Sec-independent protein translocase protein TatA.